The primary structure comprises 308 residues: Tryptophan 2,3-dioxygenase (308 aa).

Residues 1-35 (MQPPGDNAPAGCPFSGAHAAQPAHEAPHVPGDAAG) form a disordered region. A compositionally biased stretch (low complexity) spans 17 to 30 (AHAAQPAHEAPHVP). Residues 77-81 (FIIQH), Tyr139, and Arg143 each bind substrate. His266 contacts heme. Thr280 contributes to the substrate binding site.

This sequence belongs to the tryptophan 2,3-dioxygenase family. Homotetramer. Heme is required as a cofactor.

It carries out the reaction L-tryptophan + O2 = N-formyl-L-kynurenine. The protein operates within amino-acid degradation; L-tryptophan degradation via kynurenine pathway; L-kynurenine from L-tryptophan: step 1/2. In terms of biological role, heme-dependent dioxygenase that catalyzes the oxidative cleavage of the L-tryptophan (L-Trp) pyrrole ring and converts L-tryptophan to N-formyl-L-kynurenine. Catalyzes the oxidative cleavage of the indole moiety. In Burkholderia ambifaria (strain ATCC BAA-244 / DSM 16087 / CCUG 44356 / LMG 19182 / AMMD) (Burkholderia cepacia (strain AMMD)), this protein is Tryptophan 2,3-dioxygenase.